Consider the following 122-residue polypeptide: Large ribosomal subunit protein uL18 (122 aa).

It belongs to the universal ribosomal protein uL18 family. Part of the 50S ribosomal subunit; part of the 5S rRNA/L5/L18/L25 subcomplex. Contacts the 5S and 23S rRNAs.

Its function is as follows. This is one of the proteins that bind and probably mediate the attachment of the 5S RNA into the large ribosomal subunit, where it forms part of the central protuberance. The polypeptide is Large ribosomal subunit protein uL18 (Prochlorococcus marinus (strain MIT 9301)).